Reading from the N-terminus, the 326-residue chain is Fructose-1,6-bisphosphatase class 1 (326 aa).

Residues glutamate 90, aspartate 111, leucine 113, and aspartate 114 each contribute to the Mg(2+) site. Residues 114–117 (DGSS), tyrosine 222, and lysine 253 contribute to the substrate site. Glutamate 259 lines the Mg(2+) pocket.

Belongs to the FBPase class 1 family. Homotetramer. It depends on Mg(2+) as a cofactor.

Its subcellular location is the cytoplasm. The catalysed reaction is beta-D-fructose 1,6-bisphosphate + H2O = beta-D-fructose 6-phosphate + phosphate. It participates in carbohydrate biosynthesis; gluconeogenesis. The chain is Fructose-1,6-bisphosphatase class 1 from Citrifermentans bemidjiense (strain ATCC BAA-1014 / DSM 16622 / JCM 12645 / Bem) (Geobacter bemidjiensis).